The following is an 876-amino-acid chain: Valine--tRNA ligase (876 aa).

The short motif at 44–54 (PNVTGKLHLGH) is the 'HIGH' region element. Positions 520 to 524 (KMSKS) match the 'KMSKS' region motif. Residue Lys-523 participates in ATP binding. The stretch at 805–876 (LEGLIDMDKE…VKARIEQLKA (72 aa)) forms a coiled coil.

Belongs to the class-I aminoacyl-tRNA synthetase family. ValS type 1 subfamily. Monomer.

The protein resides in the cytoplasm. It carries out the reaction tRNA(Val) + L-valine + ATP = L-valyl-tRNA(Val) + AMP + diphosphate. Its function is as follows. Catalyzes the attachment of valine to tRNA(Val). As ValRS can inadvertently accommodate and process structurally similar amino acids such as threonine, to avoid such errors, it has a 'posttransfer' editing activity that hydrolyzes mischarged Thr-tRNA(Val) in a tRNA-dependent manner. This is Valine--tRNA ligase from Staphylococcus carnosus (strain TM300).